The following is a 172-amino-acid chain: S-ribosylhomocysteine lyase (172 aa).

The Fe cation site is built by His54, His58, and Cys128.

The protein belongs to the LuxS family. As to quaternary structure, homodimer. Requires Fe cation as cofactor.

It carries out the reaction S-(5-deoxy-D-ribos-5-yl)-L-homocysteine = (S)-4,5-dihydroxypentane-2,3-dione + L-homocysteine. Functionally, involved in the synthesis of autoinducer 2 (AI-2) which is secreted by bacteria and is used to communicate both the cell density and the metabolic potential of the environment. The regulation of gene expression in response to changes in cell density is called quorum sensing. Catalyzes the transformation of S-ribosylhomocysteine (RHC) to homocysteine (HC) and 4,5-dihydroxy-2,3-pentadione (DPD). This chain is S-ribosylhomocysteine lyase, found in Vibrio cholerae serotype O1 (strain ATCC 39541 / Classical Ogawa 395 / O395).